The following is a 311-amino-acid chain: tRNA-cytidine(32) 2-sulfurtransferase (311 aa).

The PP-loop motif signature appears at 47–52 (SGGKDS). Positions 122, 125, and 213 each coordinate [4Fe-4S] cluster.

This sequence belongs to the TtcA family. As to quaternary structure, homodimer. Mg(2+) is required as a cofactor. It depends on [4Fe-4S] cluster as a cofactor.

It is found in the cytoplasm. It catalyses the reaction cytidine(32) in tRNA + S-sulfanyl-L-cysteinyl-[cysteine desulfurase] + AH2 + ATP = 2-thiocytidine(32) in tRNA + L-cysteinyl-[cysteine desulfurase] + A + AMP + diphosphate + H(+). Its pathway is tRNA modification. In terms of biological role, catalyzes the ATP-dependent 2-thiolation of cytidine in position 32 of tRNA, to form 2-thiocytidine (s(2)C32). The sulfur atoms are provided by the cysteine/cysteine desulfurase (IscS) system. This is tRNA-cytidine(32) 2-sulfurtransferase from Escherichia coli O81 (strain ED1a).